Reading from the N-terminus, the 1625-residue chain is Nonribosomal peptide synthetase aclP (1625 aa).

Residues 47–123 (TTMNPSSQLL…ALFTDLLSSE (77 aa)) form the Carrier 1 domain. Serine 84 carries the post-translational modification O-(pantetheine 4'-phosphoryl)serine. The segment at 127 to 157 (IPIPDPSDDSDDLSNPSSSTGGSPRVATPIS) is disordered. The condensation 1 stretch occupies residues 286 to 567 (ASSQSTVIWA…KYFQRALQLL (282 aa)). The segment at 614 to 997 (FESAVSRNPM…GRTDRQIKLR (384 aa)) is adenylation. A Carrier 2 domain is found at 1096–1171 (SPMEKLVGDA…HLAAAIDSGL (76 aa)). Serine 1131 carries the O-(pantetheine 4'-phosphoryl)serine modification. The tract at residues 1195–1585 (EWWHKYQINE…LQARIPLALS (391 aa)) is condensation 2.

Belongs to the NRP synthetase family.

It functions in the pathway mycotoxin biosynthesis. Its function is as follows. Nonribosomal peptide synthetase; part of the gene cluster that mediates the biosynthesis of aspirochlorine (or antibiotic A30641), an unusual halogenated spiro compound with distinctive antifungal properties due to selective inhibition of protein biosynthesis, and which is also active against bacteria, viruses, and murine tumor cells. The non-ribosomal peptide synthetase (NRPS) aclP is responsible the formation of the diketopiperazine (DKP) core from the condensation of 2 phenylalanine residues. One Phe residue is tailored into chlorotyrosine by hydroxylation and chlorination, whereas the second Phe undergoes an unprecedented C-C bond cleavage to be converted into glycine. After formation of the DKP, sulfur is incorporated into the DKP by conjugation with glutathione by aclG, followed by its stepwise degradation to the thiol by aclI, aclJ and aclK, and the dithiol oxidation by aclT. In addition, oxygenases (aclB, aclC, aclL and aclO) and O-methyltransferases (aclM and aclU) act as tailoring enzymes to produce the intermediate dechloroaspirochlorine. Ultimately, chlorination of dechloroaspirochlorine by the halogenase aclH is the last step in the aspirochlorine pathway. This Aspergillus oryzae (strain ATCC 42149 / RIB 40) (Yellow koji mold) protein is Nonribosomal peptide synthetase aclP.